The chain runs to 908 residues: Protein translocase subunit SecA (908 aa).

ATP-binding positions include Q87, 105 to 109 (GEGKT), and D494. Positions 871–908 (QEFSGGNLNRSQSNGSSVTVTTSSGGGTERKTSRRRKR) are disordered. Residues 874–884 (SGGNLNRSQSN) are compositionally biased toward polar residues.

The protein belongs to the SecA family. As to quaternary structure, monomer and homodimer. Part of the essential Sec protein translocation apparatus which comprises SecA, SecYEG and auxiliary proteins SecDF. Other proteins may also be involved.

The protein resides in the cell inner membrane. Its subcellular location is the cytoplasm. The enzyme catalyses ATP + H2O + cellular proteinSide 1 = ADP + phosphate + cellular proteinSide 2.. In terms of biological role, part of the Sec protein translocase complex. Interacts with the SecYEG preprotein conducting channel. Has a central role in coupling the hydrolysis of ATP to the transfer of proteins into and across the cell membrane, serving as an ATP-driven molecular motor driving the stepwise translocation of polypeptide chains across the membrane. This is Protein translocase subunit SecA from Leptospira interrogans serogroup Icterohaemorrhagiae serovar Lai (strain 56601).